A 767-amino-acid chain; its full sequence is Syn-copalyl diphosphate synthase (767 aa).

The segment at 45 to 74 (GPMLISKSPPYPASEETREWEAEGQHEHTD) is disordered. Residues 59-74 (EETREWEAEGQHEHTD) show a composition bias toward basic and acidic residues. Lysine 233 serves as a coordination point for substrate. Mg(2+)-binding residues include aspartate 365 and aspartate 367. Residues 365–368 (DIDD) carry the DXDD motif motif. Residue lysine 453 participates in substrate binding.

Requires Mg(2+) as cofactor.

It catalyses the reaction (2E,6E,10E)-geranylgeranyl diphosphate = 9alpha-copalyl diphosphate. Catalyzes the conversion of geranylgeranyl diphosphate to the phytoalexin precursor syn-copalyl diphosphate. The sequence is that of Syn-copalyl diphosphate synthase (CPS4) from Oryza sativa subsp. indica (Rice).